The chain runs to 50 residues: Sperm protamine P1 (50 aa).

It belongs to the protamine P1 family. As to quaternary structure, cross-linked by interchain disulfide bonds around the DNA-helix. Testis.

It is found in the nucleus. The protein resides in the chromosome. Its function is as follows. Protamines substitute for histones in the chromatin of sperm during the haploid phase of spermatogenesis. They compact sperm DNA into a highly condensed, stable and inactive complex. This Saimiri sciureus (Common squirrel monkey) protein is Sperm protamine P1 (PRM1).